The chain runs to 463 residues: tRNA-2-methylthio-N(6)-dimethylallyladenosine synthase (463 aa).

Residues 5 to 125 form the MTTase N-terminal domain; the sequence is RKLHIKSYGC…LPQLLAKAEQ (121 aa). Positions 14, 50, 88, 166, 170, and 173 each coordinate [4Fe-4S] cluster. Residues 152 to 384 enclose the Radical SAM core domain; the sequence is RARGISAFVT…QQLIDQQQSA (233 aa). The region spanning 387–449 is the TRAM domain; it reads KAAIGRTVEV…RYSLLGELAS (63 aa).

This sequence belongs to the methylthiotransferase family. MiaB subfamily. Monomer. [4Fe-4S] cluster serves as cofactor.

The protein resides in the cytoplasm. The catalysed reaction is N(6)-dimethylallyladenosine(37) in tRNA + (sulfur carrier)-SH + AH2 + 2 S-adenosyl-L-methionine = 2-methylsulfanyl-N(6)-dimethylallyladenosine(37) in tRNA + (sulfur carrier)-H + 5'-deoxyadenosine + L-methionine + A + S-adenosyl-L-homocysteine + 2 H(+). Catalyzes the methylthiolation of N6-(dimethylallyl)adenosine (i(6)A), leading to the formation of 2-methylthio-N6-(dimethylallyl)adenosine (ms(2)i(6)A) at position 37 in tRNAs that read codons beginning with uridine. The chain is tRNA-2-methylthio-N(6)-dimethylallyladenosine synthase from Rhodopseudomonas palustris (strain TIE-1).